We begin with the raw amino-acid sequence, 382 residues long: Lipid-A-disaccharide synthase (382 aa).

It belongs to the LpxB family.

It carries out the reaction 2-N,3-O-bis[(3R)-3-hydroxytetradecanoyl]-alpha-D-glucosaminyl 1-phosphate + UDP-2-N,3-O-bis[(3R)-3-hydroxytetradecanoyl]-alpha-D-glucosamine = lipid A disaccharide (E. coli) + UDP + H(+). It catalyses the reaction a lipid X + a UDP-2-N,3-O-bis[(3R)-3-hydroxyacyl]-alpha-D-glucosamine = a lipid A disaccharide + UDP + H(+). The protein operates within glycolipid biosynthesis; lipid IV(A) biosynthesis; lipid IV(A) from (3R)-3-hydroxytetradecanoyl-[acyl-carrier-protein] and UDP-N-acetyl-alpha-D-glucosamine: step 5/6. Functionally, condensation of UDP-2,3-diacylglucosamine and 2,3-diacylglucosamine-1-phosphate to form lipid A disaccharide, a precursor of lipid A, a phosphorylated glycolipid that anchors the lipopolysaccharide to the outer membrane of the cell. In Escherichia coli O17:K52:H18 (strain UMN026 / ExPEC), this protein is Lipid-A-disaccharide synthase.